The sequence spans 214 residues: Probable GTP-binding protein EngB (214 aa).

The EngB-type G domain occupies E25–L203. GTP contacts are provided by residues G33 to S40, G60 to L64, D80 to G83, T147 to D150, and F182 to S184. Mg(2+)-binding residues include S40 and T62.

It belongs to the TRAFAC class TrmE-Era-EngA-EngB-Septin-like GTPase superfamily. EngB GTPase family. The cofactor is Mg(2+).

Functionally, necessary for normal cell division and for the maintenance of normal septation. The polypeptide is Probable GTP-binding protein EngB (Teredinibacter turnerae (strain ATCC 39867 / T7901)).